The primary structure comprises 189 residues: Peptidyl-tRNA hydrolase (189 aa).

Tyrosine 14 provides a ligand contact to tRNA. Residue histidine 19 is the Proton acceptor of the active site. TRNA is bound by residues phenylalanine 64, asparagine 66, and asparagine 112.

This sequence belongs to the PTH family. Monomer.

The protein resides in the cytoplasm. It catalyses the reaction an N-acyl-L-alpha-aminoacyl-tRNA + H2O = an N-acyl-L-amino acid + a tRNA + H(+). Hydrolyzes ribosome-free peptidyl-tRNAs (with 1 or more amino acids incorporated), which drop off the ribosome during protein synthesis, or as a result of ribosome stalling. Its function is as follows. Catalyzes the release of premature peptidyl moieties from peptidyl-tRNA molecules trapped in stalled 50S ribosomal subunits, and thus maintains levels of free tRNAs and 50S ribosomes. The protein is Peptidyl-tRNA hydrolase of Zymomonas mobilis subsp. mobilis (strain ATCC 31821 / ZM4 / CP4).